The sequence spans 281 residues: MFDLIKAIIIGIIEGLTEFLPVSSTGHIILAEALMKIPSGNVWTKAFSSVFDYSIQLGAIFAVIQLYFDKLNPFSSKKTDHEKFQTWRLWIRVIVGVLPAIVFGFALNDFMDAHLMNFWVVSATLIIYGIAFIVIENRQKSIVPVITNVNQITFKLALYIGLFQVLSIVPGTSRSGATILGAIILGASRFVAAEFSFFLSIPVMFGVTFLKMGSFFRDGGSFTGMQSIVMLVGFIVSWIVAWFAIKFMMNYIKNNDFKVFGYYRIIIGAIFLVFGILGIVG.

The next 8 membrane-spanning stretches (helical) occupy residues 2–22 (FDLI…FLPV), 46–66 (AFSS…VIQL), 93–113 (VIVG…FMDA), 115–135 (LMNF…FIVI), 152–172 (ITFK…VPGT), 190–210 (FVAA…VTFL), 228–248 (IVML…IKFM), and 259–279 (VFGY…ILGI).

Belongs to the UppP family.

It is found in the cell membrane. The catalysed reaction is di-trans,octa-cis-undecaprenyl diphosphate + H2O = di-trans,octa-cis-undecaprenyl phosphate + phosphate + H(+). In terms of biological role, catalyzes the dephosphorylation of undecaprenyl diphosphate (UPP). Confers resistance to bacitracin. The polypeptide is Undecaprenyl-diphosphatase (Leuconostoc mesenteroides subsp. mesenteroides (strain ATCC 8293 / DSM 20343 / BCRC 11652 / CCM 1803 / JCM 6124 / NCDO 523 / NBRC 100496 / NCIMB 8023 / NCTC 12954 / NRRL B-1118 / 37Y)).